The sequence spans 119 residues: Dihydroneopterin aldolase (119 aa).

Residues E21, Y53, and 72 to 73 each bind substrate; that span reads IE. K99 serves as the catalytic Proton donor/acceptor.

The protein belongs to the DHNA family.

It catalyses the reaction 7,8-dihydroneopterin = 6-hydroxymethyl-7,8-dihydropterin + glycolaldehyde. It participates in cofactor biosynthesis; tetrahydrofolate biosynthesis; 2-amino-4-hydroxy-6-hydroxymethyl-7,8-dihydropteridine diphosphate from 7,8-dihydroneopterin triphosphate: step 3/4. In terms of biological role, catalyzes the conversion of 7,8-dihydroneopterin to 6-hydroxymethyl-7,8-dihydropterin. The sequence is that of Dihydroneopterin aldolase (folB) from Streptococcus pyogenes serotype M6 (strain ATCC BAA-946 / MGAS10394).